Consider the following 431-residue polypeptide: MSNVGTPRTAQEIQQDWDTNPRWNGITRDYTAEQVAELQGSVVEEHTLAKRGAEILWDAVSAEGDDYINALGALTGNQAVQQVRAGLKAVYLSGWQVAGDANLAGHTYPDQSLYPANSVPNVVRRINNALLRADEIARVEGDTSVDNWLVPIVADGEAGFGGALNVYELQKGMITAGAAGTHWEDQLASEKKCGHLGGKVLIPTQQHIRTLNSARLAADVANTPTVVIARTDAEAATLITSDVDERDRPFITGERTAEGYYHVKPGLEPCIARAKSYAPYADMIWMETGTPDLELAKKFAEGVRSEFPDQLLSYNCSPSFNWSAHLEADEIAKFQKELGAMGFKFQFITLAGFHSLNYGMFDLAYGYAREGMPAFVDLQNREFKAAEERGFTAVKHQREVGAGYFDTIATTVDPNSSTTALKGSTEEGQFH.

The interval 1–21 (MSNVGTPRTAQEIQQDWDTNP) is disordered. 93–95 (SGW) lines the substrate pocket. Asp155 provides a ligand contact to Mg(2+). The active-site Proton acceptor is Cys193. Residues 194–195 (GH), Arg230, 315–319 (NCSPS), and Thr349 each bind substrate.

The protein belongs to the isocitrate lyase/PEP mutase superfamily. Isocitrate lyase family. As to quaternary structure, homotetramer. Mg(2+) serves as cofactor.

It carries out the reaction D-threo-isocitrate = glyoxylate + succinate. Its pathway is carbohydrate metabolism; glyoxylate cycle; (S)-malate from isocitrate: step 1/2. Functionally, involved in the metabolic adaptation in response to environmental changes. Catalyzes the reversible formation of succinate and glyoxylate from isocitrate, a key step of the glyoxylate cycle, which operates as an anaplerotic route for replenishing the tricarboxylic acid cycle during growth on fatty acid substrates. The sequence is that of Isocitrate lyase (aceA) from Corynebacterium efficiens (strain DSM 44549 / YS-314 / AJ 12310 / JCM 11189 / NBRC 100395).